The primary structure comprises 470 residues: MSSCSSLSMDDRVKIGYGSIAGASLSIIGSIGTIILIKIRNKKQEKKLLIQRKQQLSINNLNINSGSSSNIITISNSTTSLSSNNLNIQPPSFPSYSPLPTSISLSNNNNNNKNNNQKTKVSHFIINLSIANLLASIFMITIKLMMIHFNDKFIKVLPSTANHSFNALISVCTIGNGVIGFSFISTFFWTLAISMYIYQQFLSSSTINSNNNNNNINNINNNNNNNINNINNSKNNNSINNFNNSNKSNKIIKMLFYFVCWVIPFVLGSILVSGSRLIELNSDLPWCSIDSNIQLISFYFPLIICLLATTFFTILIKYKFSNDKLACSSSSLINLQSKIIQRLILFLIVILVCWVPSLISFFISFFSKNCKQFLWLEIISSTIQSCQGILNFLSYLSIFKKLKLYFKNLKKKFNNNNSNNSNNSNNNNSNNFNGGGIFYSKGKKVNNQNSNNFYFTFSTFDFDNNQIQEK.

The Extracellular segment spans residues 1-16; that stretch reads MSSCSSLSMDDRVKIG. Residues 17 to 37 traverse the membrane as a helical segment; the sequence is YGSIAGASLSIIGSIGTIILI. The Cytoplasmic segment spans residues 38 to 123; that stretch reads KIRNKKQEKK…NNNQKTKVSH (86 aa). A helical membrane pass occupies residues 124–144; it reads FIINLSIANLLASIFMITIKL. Topologically, residues 145–176 are extracellular; sequence MMIHFNDKFIKVLPSTANHSFNALISVCTIGN. The N-linked (GlcNAc...) asparagine glycan is linked to Asn-162. Residues Cys-172 and Cys-287 are joined by a disulfide bond. The helical transmembrane segment at 177–197 threads the bilayer; that stretch reads GVIGFSFISTFFWTLAISMYI. Residues 198–253 lie on the Cytoplasmic side of the membrane; that stretch reads YQQFLSSSTINSNNNNNNINNINNNNNNNINNINNSKNNNSINNFNNSNKSNKIIK. Residues 254 to 274 traverse the membrane as a helical segment; that stretch reads MLFYFVCWVIPFVLGSILVSG. The Extracellular portion of the chain corresponds to 275–295; sequence SRLIELNSDLPWCSIDSNIQL. Residues 296 to 316 form a helical membrane-spanning segment; sequence ISFYFPLIICLLATTFFTILI. At 317–342 the chain is on the cytoplasmic side; sequence KYKFSNDKLACSSSSLINLQSKIIQR. Residues 343–363 form a helical membrane-spanning segment; the sequence is LILFLIVILVCWVPSLISFFI. The Extracellular portion of the chain corresponds to 364–372; sequence SFFSKNCKQ. The helical transmembrane segment at 373–393 threads the bilayer; it reads FLWLEIISSTIQSCQGILNFL. The Cytoplasmic segment spans residues 394–470; it reads SYLSIFKKLK…DFDNNQIQEK (77 aa).

The protein belongs to the G-protein coupled receptor 5 family.

It localises to the membrane. Functionally, receptor for cAMP. This Dictyostelium discoideum (Social amoeba) protein is Cyclic AMP receptor-like protein D (crlD).